The sequence spans 643 residues: DNA-directed RNA polymerase subunit beta' (643 aa).

Cys-83, Cys-85, Cys-98, and Cys-101 together coordinate Zn(2+). The Mg(2+) site is built by Asp-480, Asp-482, and Asp-484.

The protein belongs to the RNA polymerase beta' chain family. RpoC1 subfamily. In plastids the minimal PEP RNA polymerase catalytic core is composed of four subunits: alpha, beta, beta', and beta''. When a (nuclear-encoded) sigma factor is associated with the core the holoenzyme is formed, which can initiate transcription. Requires Mg(2+) as cofactor. It depends on Zn(2+) as a cofactor.

It localises to the plastid. The protein resides in the organellar chromatophore. The catalysed reaction is RNA(n) + a ribonucleoside 5'-triphosphate = RNA(n+1) + diphosphate. Functionally, DNA-dependent RNA polymerase catalyzes the transcription of DNA into RNA using the four ribonucleoside triphosphates as substrates. In Paulinella chromatophora, this protein is DNA-directed RNA polymerase subunit beta'.